The primary structure comprises 520 residues: Cholesterol side-chain cleavage enzyme, mitochondrial (520 aa).

Residues 1–39 (MLARGLPLRSALVKACPPLLNTGREGWGHHRVGTGEGAG) constitute a mitochondrion transit peptide. Positions 27 to 48 (WGHHRVGTGEGAGISTRTPRPY) are disordered. Residue cysteine 461 participates in heme binding.

It belongs to the cytochrome P450 family. Interacts with FDX1/adrenodoxin. Requires heme as cofactor.

Its subcellular location is the mitochondrion inner membrane. It catalyses the reaction 6 reduced [adrenodoxin] + cholesterol + 3 O2 + 6 H(+) = 4-methylpentanal + pregnenolone + 6 oxidized [adrenodoxin] + 4 H2O. It carries out the reaction 2 reduced [adrenodoxin] + cholesterol + O2 + 2 H(+) = (22R)-hydroxycholesterol + 2 oxidized [adrenodoxin] + H2O. The catalysed reaction is (22R)-hydroxycholesterol + 2 reduced [adrenodoxin] + O2 + 2 H(+) = (20R,22R)-20,22-dihydroxycholesterol + 2 oxidized [adrenodoxin] + H2O. The enzyme catalyses (20R,22R)-20,22-dihydroxycholesterol + 2 reduced [adrenodoxin] + O2 + 2 H(+) = 4-methylpentanal + pregnenolone + 2 oxidized [adrenodoxin] + 2 H2O. It participates in lipid metabolism; C21-steroid hormone metabolism. The protein operates within steroid metabolism; cholesterol metabolism. In terms of biological role, a cytochrome P450 monooxygenase that catalyzes the side-chain hydroxylation and cleavage of cholesterol to pregnenolone, the precursor of most steroid hormones. Catalyzes three sequential oxidation reactions of cholesterol, namely the hydroxylation at C22 followed with the hydroxylation at C20 to yield 20R,22R-hydroxycholesterol that is further cleaved between C20 and C22 to yield the C21-steroid pregnenolone and 4-methylpentanal. Mechanistically, uses molecular oxygen inserting one oxygen atom into a substrate and reducing the second into a water molecule. Two electrons are provided by NADPH via a two-protein mitochondrial transfer system comprising flavoprotein FDXR (adrenodoxin/ferredoxin reductase) and nonheme iron-sulfur protein FDX1 or FDX2 (adrenodoxin/ferredoxin). The protein is Cholesterol side-chain cleavage enzyme, mitochondrial of Capra hircus (Goat).